A 123-amino-acid chain; its full sequence is Small ribosomal subunit protein uS12 (123 aa).

A 3-methylthioaspartic acid modification is found at Asp-89.

It belongs to the universal ribosomal protein uS12 family. In terms of assembly, part of the 30S ribosomal subunit. Contacts proteins S8 and S17. May interact with IF1 in the 30S initiation complex.

With S4 and S5 plays an important role in translational accuracy. In terms of biological role, interacts with and stabilizes bases of the 16S rRNA that are involved in tRNA selection in the A site and with the mRNA backbone. Located at the interface of the 30S and 50S subunits, it traverses the body of the 30S subunit contacting proteins on the other side and probably holding the rRNA structure together. The combined cluster of proteins S8, S12 and S17 appears to hold together the shoulder and platform of the 30S subunit. The polypeptide is Small ribosomal subunit protein uS12 (Syntrophotalea carbinolica (strain DSM 2380 / NBRC 103641 / GraBd1) (Pelobacter carbinolicus)).